The primary structure comprises 355 residues: Mu-like prophage FluMu protein gp47 (355 aa).

This sequence belongs to the Mu gp47/PBSX XkdT family.

The protein is Mu-like prophage FluMu protein gp47 of Haemophilus influenzae (strain ATCC 51907 / DSM 11121 / KW20 / Rd).